The sequence spans 475 residues: 3-isopropylmalate dehydratase large subunit (475 aa).

Cysteine 352, cysteine 412, and cysteine 415 together coordinate [4Fe-4S] cluster.

Belongs to the aconitase/IPM isomerase family. LeuC type 1 subfamily. In terms of assembly, heterodimer of LeuC and LeuD. [4Fe-4S] cluster is required as a cofactor.

It catalyses the reaction (2R,3S)-3-isopropylmalate = (2S)-2-isopropylmalate. It participates in amino-acid biosynthesis; L-leucine biosynthesis; L-leucine from 3-methyl-2-oxobutanoate: step 2/4. Its function is as follows. Catalyzes the isomerization between 2-isopropylmalate and 3-isopropylmalate, via the formation of 2-isopropylmaleate. In Gluconobacter oxydans (strain 621H) (Gluconobacter suboxydans), this protein is 3-isopropylmalate dehydratase large subunit.